The sequence spans 625 residues: ATP-dependent RNA helicase DBP9 (625 aa).

The disordered stretch occupies residues 1 to 21; that stretch reads MKRKLDANNVPSPEDSAGKSI. The Q motif motif lies at 24 to 52; sequence HSFETLKLDPRLLQALTQQKFTKPTPIQA. Residues 55–233 enclose the Helicase ATP-binding domain; sequence IPLALDGKDV…GLFCRNPVVL (179 aa). Residue 68 to 75 coordinates ATP; that stretch reads AKTGSGKT. Residues 181–184 carry the DEAD box motif; the sequence is DEAD. In terms of domain architecture, Helicase C-terminal spans 260–485; that stretch reads LLTYVIFKLQ…EVKPYHFDMK (226 aa). 2 disordered regions span residues 339–393 and 590–625; these read RKNS…EKDY and IRKAREKNKGRGRGGKAGRGGKRVDPLKSFNSGGKH. A compositionally biased stretch (basic and acidic residues) spans 347-357; sequence RKSDQCSRDSE. Residues 361–370 are compositionally biased toward polar residues; it reads AQTSRNNDQY. Residues 599–610 show a composition bias toward basic residues; that stretch reads GRGRGGKAGRGG.

It belongs to the DEAD box helicase family. DDX56/DBP9 subfamily.

The protein resides in the nucleus. The protein localises to the nucleolus. The enzyme catalyses ATP + H2O = ADP + phosphate + H(+). In terms of biological role, ATP-binding RNA helicase involved in the biogenesis of 60S ribosomal subunits and is required for the normal formation of 25S and 5.8S rRNAs. The sequence is that of ATP-dependent RNA helicase DBP9 (DBP9) from Ajellomyces capsulatus (strain NAm1 / WU24) (Darling's disease fungus).